Here is a 147-residue protein sequence, read N- to C-terminus: Ubiquitin-conjugating enzyme E2 D2 (147 aa).

The UBC core domain occupies 1-147 (MALKRIHKEL…SREWTQKYAM (147 aa)). The active-site Glycyl thioester intermediate is C85.

Belongs to the ubiquitin-conjugating enzyme family. As to quaternary structure, interacts with SCF (SKP1-CUL1-F-box protein) E3 ubiquitin ligase complex. Interacts with CNOT4 (via RING domain). Interacts with E3 ubiquitin-protein ligases CBLC, PJA1 and PJA2. Interacts with PDZRN3. Interacts with PPP1R11. Interacts with E3 ubiquitin-protein ligase PHF7; the interaction inhibits cleavage of PHF7 and promotes association of the complex with the nucleosome core particle.

It carries out the reaction S-ubiquitinyl-[E1 ubiquitin-activating enzyme]-L-cysteine + [E2 ubiquitin-conjugating enzyme]-L-cysteine = [E1 ubiquitin-activating enzyme]-L-cysteine + S-ubiquitinyl-[E2 ubiquitin-conjugating enzyme]-L-cysteine.. The catalysed reaction is S-ubiquitinyl-[E1 ubiquitin-activating enzyme]-L-cysteine + [acceptor protein]-L-lysine = [E1 ubiquitin-activating enzyme]-L-cysteine + N(6)-monoubiquitinyl-[acceptor protein]-L-lysine.. Its pathway is protein modification; protein ubiquitination. Functionally, accepts ubiquitin from the E1 complex and catalyzes its covalent attachment to other proteins. In vitro catalyzes 'Lys-48'-linked polyubiquitination. Mediates the selective degradation of short-lived and abnormal proteins. Functions in the E6/E6-AP-induced ubiquitination of p53/TP53. Mediates ubiquitination of PEX5 and SQSTM1 and autoubiquitination of STUB1 and TRAF6. Involved in the signal-induced conjugation and subsequent degradation of NFKBIA, FBXW2-mediated GCM1 ubiquitination and degradation, MDM2-dependent degradation of p53/TP53 and the activation of MAVS in the mitochondria by RIGI in response to viral infection. Essential for viral activation of IRF3. This chain is Ubiquitin-conjugating enzyme E2 D2 (UBE2D2), found in Sus scrofa (Pig).